We begin with the raw amino-acid sequence, 120 residues long: Large ribosomal subunit protein uL18 (120 aa).

The segment covering 1 to 10 has biased composition (basic and acidic residues); the sequence is MKRTRTESVQ. Residues 1–24 form a disordered region; it reads MKRTRTESVQRRHSRIRRKVEGTP.

This sequence belongs to the universal ribosomal protein uL18 family. In terms of assembly, part of the 50S ribosomal subunit; part of the 5S rRNA/L5/L18/L25 subcomplex. Contacts the 5S and 23S rRNAs.

Functionally, this is one of the proteins that bind and probably mediate the attachment of the 5S RNA into the large ribosomal subunit, where it forms part of the central protuberance. This Gloeothece citriformis (strain PCC 7424) (Cyanothece sp. (strain PCC 7424)) protein is Large ribosomal subunit protein uL18.